Reading from the N-terminus, the 178-residue chain is Large ribosomal subunit protein bL25 (178 aa).

It belongs to the bacterial ribosomal protein bL25 family. CTC subfamily. As to quaternary structure, part of the 50S ribosomal subunit; part of the 5S rRNA/L5/L18/L25 subcomplex. Contacts the 5S rRNA. Binds to the 5S rRNA independently of L5 and L18.

In terms of biological role, this is one of the proteins that binds to the 5S RNA in the ribosome where it forms part of the central protuberance. The chain is Large ribosomal subunit protein bL25 from Nitratiruptor sp. (strain SB155-2).